A 248-amino-acid polypeptide reads, in one-letter code: Probable uridine-cytidine kinase (248 aa).

15–23 is an ATP binding site; it reads GGTSCGKST. Residues Asp73, Tyr101, Arg154, Arg164, and Gln172 each contribute to the substrate site. Position 201 (Asp201) interacts with ATP. Residues 224–248 are disordered; it reads SDEEEEKENELVKQGSFRRPFSRPH.

The protein belongs to the uridine kinase family.

It carries out the reaction uridine + ATP = UMP + ADP + H(+). It catalyses the reaction cytidine + ATP = CMP + ADP + H(+). Its pathway is pyrimidine metabolism; CTP biosynthesis via salvage pathway; CTP from cytidine: step 1/3. It participates in pyrimidine metabolism; UMP biosynthesis via salvage pathway; UMP from uridine: step 1/1. The polypeptide is Probable uridine-cytidine kinase (Caenorhabditis elegans).